Reading from the N-terminus, the 222-residue chain is Large ribosomal subunit protein uL4 (222 aa).

This sequence belongs to the universal ribosomal protein uL4 family. In terms of assembly, part of the 50S ribosomal subunit.

Functionally, one of the primary rRNA binding proteins, this protein initially binds near the 5'-end of the 23S rRNA. It is important during the early stages of 50S assembly. It makes multiple contacts with different domains of the 23S rRNA in the assembled 50S subunit and ribosome. In terms of biological role, forms part of the polypeptide exit tunnel. In Methylacidiphilum infernorum (isolate V4) (Methylokorus infernorum (strain V4)), this protein is Large ribosomal subunit protein uL4.